We begin with the raw amino-acid sequence, 127 residues long: Large ribosomal subunit protein bL12 (127 aa).

Residues 98–127 (PKPIKEGAPKAEAESLKSKLEEAGAEVELK) form a disordered region.

Belongs to the bacterial ribosomal protein bL12 family. In terms of assembly, homodimer. Part of the ribosomal stalk of the 50S ribosomal subunit. Forms a multimeric L10(L12)X complex, where L10 forms an elongated spine to which 2 to 4 L12 dimers bind in a sequential fashion. Binds GTP-bound translation factors.

In terms of biological role, forms part of the ribosomal stalk which helps the ribosome interact with GTP-bound translation factors. Is thus essential for accurate translation. The sequence is that of Large ribosomal subunit protein bL12 from Amoebophilus asiaticus (strain 5a2).